The following is a 151-amino-acid chain: Flavodoxin YqcA (151 aa).

Residues 4-145 (IGIFVGTVYG…ISCPWVEAWA (142 aa)) form the Flavodoxin-like domain. FMN-binding positions include 10-15 (TVYGNA) and 99-101 (NFC).

Belongs to the flavodoxin family. MioC subfamily. As to quaternary structure, monomer. Requires FMN as cofactor.

In terms of biological role, probable electron transporter. The polypeptide is Flavodoxin YqcA (Pectobacterium carotovorum subsp. carotovorum (Erwinia carotovora subsp. carotovora)).